The following is a 235-amino-acid chain: Thiamine import ATP-binding protein ThiQ (235 aa).

The region spanning 2 to 230 (LKLENLTYRY…TVPEAAILGM (229 aa)) is the ABC transporter domain. Position 32–39 (32–39 (GPSGAGKS)) interacts with ATP.

It belongs to the ABC transporter superfamily. Thiamine importer (TC 3.A.1.19.1) family. The complex is composed of two ATP-binding proteins (ThiQ), two transmembrane proteins (ThiP) and a solute-binding protein (ThiB).

It localises to the cell inner membrane. The catalysed reaction is thiamine(out) + ATP + H2O = thiamine(in) + ADP + phosphate + H(+). Part of the ABC transporter complex ThiBPQ involved in thiamine import. Responsible for energy coupling to the transport system. This is Thiamine import ATP-binding protein ThiQ from Photorhabdus laumondii subsp. laumondii (strain DSM 15139 / CIP 105565 / TT01) (Photorhabdus luminescens subsp. laumondii).